A 544-amino-acid chain; its full sequence is MFS-type transporter prx5 (544 aa).

Positions 1–28 are disordered; it reads MAVDTEKDSVQAGSPMETPGSPVDETTE. Transmembrane regions (helical) follow at residues 36–56, 90–110, 116–136, 148–168, 178–198, 221–241, 249–269, 290–310, 330–350, 361–381, 387–407, 418–438, and 505–525; these read WIVS…IPVV, LDHL…VASA, VIAG…AAFA, IGVV…PVTA, AWNF…LLFL, GAFL…WAGV, VVAP…WESF, FTAP…SSIL, VILS…LTCF, LTGS…VTPT, IAFI…SIAI, GVSG…ATSI, and AIFV…AACL.

It belongs to the major facilitator superfamily.

It localises to the cell membrane. MFS-type transporter; part of the gene cluster that mediates the biosynthesis of PR-toxin, a bicyclic sesquiterpene belonging to the eremophilane class and acting as a mycotoxin. The polypeptide is MFS-type transporter prx5 (Penicillium rubens (strain ATCC 28089 / DSM 1075 / NRRL 1951 / Wisconsin 54-1255) (Penicillium chrysogenum)).